The following is a 442-amino-acid chain: UDP-N-acetylmuramoylalanine--D-glutamate ligase (442 aa).

113–119 (GSNGKTT) contacts ATP.

Belongs to the MurCDEF family.

The protein localises to the cytoplasm. It carries out the reaction UDP-N-acetyl-alpha-D-muramoyl-L-alanine + D-glutamate + ATP = UDP-N-acetyl-alpha-D-muramoyl-L-alanyl-D-glutamate + ADP + phosphate + H(+). It functions in the pathway cell wall biogenesis; peptidoglycan biosynthesis. Functionally, cell wall formation. Catalyzes the addition of glutamate to the nucleotide precursor UDP-N-acetylmuramoyl-L-alanine (UMA). The chain is UDP-N-acetylmuramoylalanine--D-glutamate ligase from Coxiella burnetii (strain CbuK_Q154) (Coxiella burnetii (strain Q154)).